Consider the following 957-residue polypeptide: Glycine dehydrogenase (decarboxylating) (957 aa).

Residue Lys-708 is modified to N6-(pyridoxal phosphate)lysine.

Belongs to the GcvP family. The glycine cleavage system is composed of four proteins: P, T, L and H. Pyridoxal 5'-phosphate serves as cofactor.

It catalyses the reaction N(6)-[(R)-lipoyl]-L-lysyl-[glycine-cleavage complex H protein] + glycine + H(+) = N(6)-[(R)-S(8)-aminomethyldihydrolipoyl]-L-lysyl-[glycine-cleavage complex H protein] + CO2. Its function is as follows. The glycine cleavage system catalyzes the degradation of glycine. The P protein binds the alpha-amino group of glycine through its pyridoxal phosphate cofactor; CO(2) is released and the remaining methylamine moiety is then transferred to the lipoamide cofactor of the H protein. This Klebsiella pneumoniae (strain 342) protein is Glycine dehydrogenase (decarboxylating).